The primary structure comprises 420 residues: WD repeat-containing protein jip5 (420 aa).

WD repeat units lie at residues 9-48, 72-111, 117-158, 221-262, 271-314, and 318-355; these read PLSA…VDSD, RHKG…VENK, DKNG…SKVS, VSSV…DQDE, GGGE…VVSE, and DETE…GDGV. The tract at residues 39–63 is disordered; sequence RLPSDEVDSDDDGASTSSSRTGRGH. A disordered region spans residues 350-420; it reads DSGDGVNGNE…QAVMAFHDLD (71 aa). Over residues 368-387 the composition is skewed to acidic residues; it reads DDSDEDSDDGDDDDDSGDSD. Positions 394-406 are enriched in basic residues; that stretch reads DARKKRKKGKTPK.

It belongs to the WD repeat WDR55 family.

The protein resides in the nucleus. It is found in the nucleolus. The chain is WD repeat-containing protein jip5 (jip5) from Aspergillus terreus (strain NIH 2624 / FGSC A1156).